We begin with the raw amino-acid sequence, 63 residues long: Beta-defensin 35 (63 aa).

The first 23 residues, 1 to 23 (MPQTFFVFCFLFFVFLQLFPGTG), serve as a signal peptide directing secretion. 3 disulfides stabilise this stretch: cysteine 31–cysteine 58, cysteine 38–cysteine 52, and cysteine 42–cysteine 59.

Belongs to the beta-defensin family. As to expression, expressed in testis, epididymis (caput, corpus and cauda), kidney and neonatal and adult brain.

It localises to the secreted. In terms of biological role, has antibacterial activity. This is Beta-defensin 35 (Defb35) from Mus musculus (Mouse).